A 340-amino-acid polypeptide reads, in one-letter code: MDESKRKALENALKAIEKEFGKGAVMRLGEMPKQQVDVIPTGSLALDLALGIGGIPRGRIVEIYGPESGGKTTLALTIIAQAQRRGGVAAFVDAEHALDPLYAQRLGVQVEDLLVSQPDTGEQALEIVELLARSGAVDVIVVDSVAALVPRAEIEGEMGDQHVGLQARLMSQALRKLTAVLAKSNTAAIFINQVREKVGVTYGNPETTPGGRALKFYASVRLDVRKSGQPIKVGNEAVGVKVRVKVVKNKLAPPFREAELEIYFGRGLDPVADLVNVAVAAGVIEKAGSWFSYGELRLGQGKEKAAEALRERPELLEEIRAKVLERSDQVVLAAGEDEGE.

65–72 (GPESGGKT) is a binding site for ATP.

The protein belongs to the RecA family.

The protein resides in the cytoplasm. Functionally, can catalyze the hydrolysis of ATP in the presence of single-stranded DNA, the ATP-dependent uptake of single-stranded DNA by duplex DNA, and the ATP-dependent hybridization of homologous single-stranded DNAs. It interacts with LexA causing its activation and leading to its autocatalytic cleavage. The sequence is that of Protein RecA from Thermus thermophilus (strain ATCC 27634 / DSM 579 / HB8).